Reading from the N-terminus, the 572-residue chain is Methionine--tRNA ligase (572 aa).

A 'HIGH' region motif is present at residues 11–21; that stretch reads PYINGIKHLGN. Residues Cys143, Cys146, Cys156, and Cys159 each contribute to the Zn(2+) site. The 'KMSKS' region signature appears at 346-350; sequence QFSTS. Thr349 serves as a coordination point for ATP.

This sequence belongs to the class-I aminoacyl-tRNA synthetase family. MetG type 1 subfamily. As to quaternary structure, monomer. Zn(2+) serves as cofactor.

The protein resides in the cytoplasm. It catalyses the reaction tRNA(Met) + L-methionine + ATP = L-methionyl-tRNA(Met) + AMP + diphosphate. In terms of biological role, is required not only for elongation of protein synthesis but also for the initiation of all mRNA translation through initiator tRNA(fMet) aminoacylation. This is Methionine--tRNA ligase from Cereibacter sphaeroides (strain KD131 / KCTC 12085) (Rhodobacter sphaeroides).